Reading from the N-terminus, the 549-residue chain is Thermosome subunit alpha (549 aa).

The interval 529-549 (EGRQGAECPPNGCMGGMDMRM) is disordered.

The protein belongs to the TCP-1 chaperonin family. Forms a Heterooligomeric complex of two stacked eight-membered rings.

Molecular chaperone; binds unfolded polypeptides in vitro, and has a weak ATPase activity. This chain is Thermosome subunit alpha (thsA), found in Thermococcus sp. (strain KS-8).